Reading from the N-terminus, the 283-residue chain is ATP phosphoribosyltransferase (283 aa).

This sequence belongs to the ATP phosphoribosyltransferase family. Long subfamily. It depends on Mg(2+) as a cofactor.

It is found in the cytoplasm. It carries out the reaction 1-(5-phospho-beta-D-ribosyl)-ATP + diphosphate = 5-phospho-alpha-D-ribose 1-diphosphate + ATP. It functions in the pathway amino-acid biosynthesis; L-histidine biosynthesis; L-histidine from 5-phospho-alpha-D-ribose 1-diphosphate: step 1/9. Its activity is regulated as follows. Feedback inhibited by histidine. Functionally, catalyzes the condensation of ATP and 5-phosphoribose 1-diphosphate to form N'-(5'-phosphoribosyl)-ATP (PR-ATP). Has a crucial role in the pathway because the rate of histidine biosynthesis seems to be controlled primarily by regulation of HisG enzymatic activity. In Rhodococcus jostii (strain RHA1), this protein is ATP phosphoribosyltransferase.